Reading from the N-terminus, the 247-residue chain is Adenylate kinase (247 aa).

42–47 (GAGKGT) contacts ATP. Residues 62-91 (ATGDMLRAQVTAKTELGVQAKKIMDQGGLV) are NMP. Residues Thr63, Arg68, 89-91 (GLV), 118-121 (GFPR), and Gln125 contribute to the AMP site. The interval 159 to 196 (GRLVHPASGRSYHKLFNPPKKEMTDDQTGEPLVQRSDD) is LID. ATP is bound by residues Arg160 and 169–170 (SY). Residues 169–191 (SYHKLFNPPKKEMTDDQTGEPLV) are disordered. Residues Arg193 and Arg204 each coordinate AMP. Residue Gln232 coordinates ATP.

Belongs to the adenylate kinase family. AK2 subfamily. In terms of assembly, monomer.

The protein resides in the cytoplasm. Its subcellular location is the cytosol. It is found in the mitochondrion intermembrane space. It carries out the reaction AMP + ATP = 2 ADP. Functionally, catalyzes the reversible transfer of the terminal phosphate group between ATP and AMP. Plays an important role in cellular energy homeostasis and in adenine nucleotide metabolism. Adenylate kinase activity is critical for regulation of the phosphate utilization and the AMP de novo biosynthesis pathways. The polypeptide is Adenylate kinase (Meyerozyma guilliermondii (strain ATCC 6260 / CBS 566 / DSM 6381 / JCM 1539 / NBRC 10279 / NRRL Y-324) (Yeast)).